Here is a 338-residue protein sequence, read N- to C-terminus: Phytanoyl-CoA dioxygenase, peroxisomal (338 aa).

The transit peptide at 1-30 (MDYTRAGARLQVLLGHLGRPSALQIVAHPV) directs the protein to the peroxisome. Residues lysine 59 and lysine 108 each carry the N6-succinyllysine modification. 2-oxoglutarate-binding positions include lysine 120, methionine 157, 175-177 (HQD), and tryptophan 193. Histidine 175 and aspartate 177 together coordinate Fe cation. 2 positions are modified to N6-succinyllysine: lysine 231 and lysine 252. A Fe cation-binding site is contributed by histidine 264. 2-oxoglutarate contacts are provided by serine 266 and arginine 275.

The protein belongs to the PhyH family. As to quaternary structure, interacts specifically with FKBP52 and PHYHIP. The cofactor is Fe cation. Requires L-ascorbate as cofactor. ATP serves as cofactor. Mg(2+) is required as a cofactor.

Its subcellular location is the peroxisome. The enzyme catalyses phytanoyl-CoA + 2-oxoglutarate + O2 = 2-hydroxyphytanoyl-CoA + succinate + CO2. The catalysed reaction is 3-methylhexadecanoyl-CoA + 2-oxoglutarate + O2 = 2-hydroxy-3-methylhexadecanoyl-CoA + succinate + CO2. It carries out the reaction hexadecanoyl-CoA + 2-oxoglutarate + O2 = 2-hydroxyhexadecanoyl-CoA + succinate + CO2. It catalyses the reaction octanoyl-CoA + 2-oxoglutarate + O2 = 2-hydroxyoctanoyl-CoA + succinate + CO2. The enzyme catalyses decanoyl-CoA + 2-oxoglutarate + O2 = 2-hydroxydecanoyl-CoA + succinate + CO2. The catalysed reaction is 3-methylbutanoyl-CoA + 2-oxoglutarate + O2 = 2-hydroxy-3-methylbutanoyl-CoA + succinate + CO2. It carries out the reaction heptadecanoyl-CoA + 2-oxoglutarate + O2 = 2-hydroxyheptadecanoyl-CoA + succinate + CO2. It catalyses the reaction eicosanoyl-CoA + 2-oxoglutarate + O2 = 2-hydroxyeicosanoyl-CoA + succinate + CO2. The enzyme catalyses octadecanoyl-CoA + 2-oxoglutarate + O2 = 2-hydroxyoctadecanoyl-CoA + succinate + CO2. The catalysed reaction is dodecanoyl-CoA + 2-oxoglutarate + O2 = 2-hydroxydodecanoyl-CoA + succinate + CO2. It carries out the reaction tetradecanoyl-CoA + 2-oxoglutarate + O2 = 2-hydroxytetradecanoyl-CoA + succinate + CO2. It catalyses the reaction hexanoyl-CoA + 2-oxoglutarate + O2 = 2-hydroxyhexanoyl-CoA + succinate + CO2. The enzyme catalyses butanoyl-CoA + 2-oxoglutarate + O2 = 2-hydroxybutanoyl-CoA + succinate + CO2. The catalysed reaction is 3-methylnonanoyl-CoA + 2-oxoglutarate + O2 = 2-hydroxy-3-methylnonanoyl-CoA + succinate + CO2. It carries out the reaction 3-methylundecanoyl-CoA + 2-oxoglutarate + O2 = 2-hydroxy-3-methylundecanoyl-CoA + succinate + CO2. It catalyses the reaction 3-methyldodecanoyl-CoA + 2-oxoglutarate + O2 = 2-hydroxy-3-methyldodecanoyl-CoA + succinate + CO2. Its pathway is lipid metabolism; fatty acid metabolism. Functionally, catalyzes the 2-hydroxylation of racemic phytanoyl-CoA and the isomers of 3-methylhexadecanoyl-CoA. Shows activity also towards a variety of other mono-branched 3-methylacyl-CoA esters (with a chain length of at least seven carbon atoms) and straight-chain acyl-CoA esters (with a chain length longer than four carbon atoms). Does not hydroxylate long and very long straight chain acyl-CoAs or 2-methyl-and 4-methyl-branched acyl-CoAs. The polypeptide is Phytanoyl-CoA dioxygenase, peroxisomal (Phyh) (Rattus norvegicus (Rat)).